We begin with the raw amino-acid sequence, 238 residues long: Ribosomal RNA small subunit methyltransferase G (238 aa).

S-adenosyl-L-methionine contacts are provided by residues G106, L111, 157-158 (IE), and R170.

This sequence belongs to the methyltransferase superfamily. RNA methyltransferase RsmG family.

It is found in the cytoplasm. It carries out the reaction guanosine(527) in 16S rRNA + S-adenosyl-L-methionine = N(7)-methylguanosine(527) in 16S rRNA + S-adenosyl-L-homocysteine. Specifically methylates the N7 position of guanine in position 527 of 16S rRNA. This Psychrobacter arcticus (strain DSM 17307 / VKM B-2377 / 273-4) protein is Ribosomal RNA small subunit methyltransferase G.